Consider the following 168-residue polypeptide: Gastrula zinc finger protein XlCGF7.1 (168 aa).

C2H2-type zinc fingers lie at residues 6–28 (FTCT…QRTH), 34–56 (FTCT…LKCH), 62–84 (FMCT…RKIH), 90–112 (YICT…QTVH), 118–140 (FTCS…QKIH), and 146–168 (FKCN…ERIH).

Belongs to the krueppel C2H2-type zinc-finger protein family.

It localises to the nucleus. In terms of biological role, may be involved in transcriptional regulation. The sequence is that of Gastrula zinc finger protein XlCGF7.1 from Xenopus laevis (African clawed frog).